A 131-amino-acid chain; its full sequence is Capsid protein (131 aa).

The Ca(2+) site is built by Gln2 and Tyr131.

The protein belongs to the Leviviricetes capsid protein family. Homodimer. The capsid proteins form dimers that assemble by group of 5. Twelve such pentamers are linked together with free dimers. The homodimers binds to the viral RNA via an operator hairpin, but also to many other RNA sequences in the viral genome; this interaction probably shifts the virus from the replicative to the assembly phase and ensures specific encapsidation of the viral genome.

It localises to the virion. Capsid protein self-assembles to form an icosahedral capsid with a T=3 symmetry, about 26 nm in diameter, and consisting of 89 capsid proteins dimers (178 capsid proteins). Involved in viral genome encapsidation through the interaction between a capsid protein dimer and the multiple packaging signals present in the RNA genome. The capsid also contains 1 copy of the A2 maturation protein. In terms of biological role, acts as a translational repressor of viral replicase synthesis late in infection. This latter function is the result of capsid protein interaction with an RNA hairpin which contains the replicase ribosome-binding site. The polypeptide is Capsid protein (Pseudomonas phage PRR1 (Bacteriophage PRR1)).